A 208-amino-acid polypeptide reads, in one-letter code: ATP phosphoribosyltransferase (208 aa).

This sequence belongs to the ATP phosphoribosyltransferase family. Short subfamily. In terms of assembly, heteromultimer composed of HisG and HisZ subunits.

It is found in the cytoplasm. The enzyme catalyses 1-(5-phospho-beta-D-ribosyl)-ATP + diphosphate = 5-phospho-alpha-D-ribose 1-diphosphate + ATP. Its pathway is amino-acid biosynthesis; L-histidine biosynthesis; L-histidine from 5-phospho-alpha-D-ribose 1-diphosphate: step 1/9. In terms of biological role, catalyzes the condensation of ATP and 5-phosphoribose 1-diphosphate to form N'-(5'-phosphoribosyl)-ATP (PR-ATP). Has a crucial role in the pathway because the rate of histidine biosynthesis seems to be controlled primarily by regulation of HisG enzymatic activity. The protein is ATP phosphoribosyltransferase of Thermotoga neapolitana (strain ATCC 49049 / DSM 4359 / NBRC 107923 / NS-E).